Reading from the N-terminus, the 71-residue chain is uncharacterized protein (71 aa).

The region spanning 5 to 59 (IKEFRAKFNMTQEELAKRVGVRRETIVFLEKGKYNPSLKLAYKIARVFNAKIEDI) is the HTH cro/C1-type domain. The H-T-H motif DNA-binding region spans 16 to 35 (QEELAKRVGVRRETIVFLEK).

This is an uncharacterized protein from Archaeoglobus fulgidus (strain ATCC 49558 / DSM 4304 / JCM 9628 / NBRC 100126 / VC-16).